Here is a 317-residue protein sequence, read N- to C-terminus: Fe-S cluster assembly protein dre2 (317 aa).

Residues 22–152 are N-terminal SAM-like domain; sequence PVQAKRTLLL…KPNFEPSAAV (131 aa). A linker region spans residues 153 to 209; that stretch reads PLKFGLKKKNKPTPTAVPSIPTGFAAPMGIDSPVTNHDRDEDDELINEDTLLSEEDL. Positions 219, 230, 233, and 235 each coordinate [2Fe-2S] cluster. A fe-S binding site A region spans residues 219-235; that stretch reads CQPKTGRRRRACKDCTC. Positions 280, 283, 291, and 294 each coordinate [4Fe-4S] cluster. 2 consecutive short sequence motifs (cx2C motif) follow at residues 280–283 and 291–294; these read CGSC and CDGC. Residues 280–294 are fe-S binding site B; that stretch reads CGSCALGDAFRCDGC.

The protein belongs to the anamorsin family. Monomer. Interacts with tah18. Interacts with mia40. The cofactor is [2Fe-2S] cluster. [4Fe-4S] cluster serves as cofactor.

It localises to the cytoplasm. The protein resides in the mitochondrion intermembrane space. In terms of biological role, component of the cytosolic iron-sulfur (Fe-S) protein assembly (CIA) machinery required for the maturation of extramitochondrial Fe-S proteins. Part of an electron transfer chain functioning in an early step of cytosolic Fe-S biogenesis, facilitating the de novo assembly of a [4Fe-4S] cluster on the scaffold complex cfd1-nbp35. Electrons are transferred to dre2 from NADPH via the FAD- and FMN-containing protein tah18. Tah18-dre2 are also required for the assembly of the diferric tyrosyl radical cofactor of ribonucleotide reductase (RNR), probably by providing electrons for reduction during radical cofactor maturation in the catalytic small subunit rnr2. The sequence is that of Fe-S cluster assembly protein dre2 from Penicillium rubens (strain ATCC 28089 / DSM 1075 / NRRL 1951 / Wisconsin 54-1255) (Penicillium chrysogenum).